An 809-amino-acid chain; its full sequence is Leucine--tRNA ligase (809 aa).

The short motif at 40–50 is the 'HIGH' region element; that stretch reads PYPSGRIHMGH. The 'KMSKS' region signature appears at 579–583; the sequence is KMSKS. ATP is bound at residue K582.

Belongs to the class-I aminoacyl-tRNA synthetase family.

It is found in the cytoplasm. The catalysed reaction is tRNA(Leu) + L-leucine + ATP = L-leucyl-tRNA(Leu) + AMP + diphosphate. The polypeptide is Leucine--tRNA ligase (Campylobacter jejuni subsp. jejuni serotype O:23/36 (strain 81-176)).